The chain runs to 226 residues: Ribosomal RNA small subunit methyltransferase G (226 aa).

S-adenosyl-L-methionine-binding positions include Gly95, Leu100, 146 to 147, and Arg159; that span reads VE.

This sequence belongs to the methyltransferase superfamily. RNA methyltransferase RsmG family.

It is found in the cytoplasm. It carries out the reaction guanosine(527) in 16S rRNA + S-adenosyl-L-methionine = N(7)-methylguanosine(527) in 16S rRNA + S-adenosyl-L-homocysteine. Specifically methylates the N7 position of guanine in position 527 of 16S rRNA. The sequence is that of Ribosomal RNA small subunit methyltransferase G from Acidovorax ebreus (strain TPSY) (Diaphorobacter sp. (strain TPSY)).